Here is a 119-residue protein sequence, read N- to C-terminus: Ribonuclease P protein component (119 aa).

Belongs to the RnpA family. As to quaternary structure, consists of a catalytic RNA component (M1 or rnpB) and a protein subunit.

It carries out the reaction Endonucleolytic cleavage of RNA, removing 5'-extranucleotides from tRNA precursor.. RNaseP catalyzes the removal of the 5'-leader sequence from pre-tRNA to produce the mature 5'-terminus. It can also cleave other RNA substrates such as 4.5S RNA. The protein component plays an auxiliary but essential role in vivo by binding to the 5'-leader sequence and broadening the substrate specificity of the ribozyme. The sequence is that of Ribonuclease P protein component from Listeria welshimeri serovar 6b (strain ATCC 35897 / DSM 20650 / CCUG 15529 / CIP 8149 / NCTC 11857 / SLCC 5334 / V8).